A 553-amino-acid chain; its full sequence is Heterochromatin protein 1-binding protein 3 (553 aa).

At alanine 2 the chain carries N-acetylalanine. Serine 6 is modified (phosphoserine). The tract at residues 30–131 (LGEKADDSTM…SKEKEKKVKK (102 aa)) is disordered. Residue threonine 51 is modified to Phosphothreonine. The span at 60–71 (GEEEKPEPDGSS) shows a compositional bias: acidic residues. Residue lysine 64 forms a Glycyl lysine isopeptide (Lys-Gly) (interchain with G-Cter in SUMO2) linkage. Threonine 85 carries the post-translational modification Phosphothreonine. Residues 91-127 (REAEQPKGEPESGEKEESKSAEETKKEEKDQSKEKEK) are compositionally biased toward basic and acidic residues. A Glycyl lysine isopeptide (Lys-Gly) (interchain with G-Cter in SUMO2) cross-link involves residue lysine 97. Phosphoserine is present on residues serine 142, serine 155, and serine 156. Positions 157-232 (PRPKMDAILT…GASGSFVVVQ (76 aa)) constitute an H15 1 domain. Lysine 190 bears the N6-acetyllysine mark. A disordered region spans residues 231 to 251 (VQKSKTPQKSKNRKKGSAVDP). Residues 236–246 (TPQKSKNRKKG) are compositionally biased toward basic residues. Serine 247 is modified (phosphoserine). The short motif at 253–257 (PQVKL) is the PxVxL motif element. H15 domains lie at 253–328 (PQVK…QLKK) and 335–411 (LGGS…QLCF). A Glycyl lysine isopeptide (Lys-Gly) (interchain with G-Cter in SUMO2) cross-link involves residue lysine 256. The interval 422-553 (PKKVSDGSED…MKKKSFKTKK (132 aa)) is disordered. Over residues 428–449 (GSEDEDEEEDEEESSEDSEDEE) the composition is skewed to acidic residues. Serine 441, serine 442, and serine 445 each carry phosphoserine. 2 stretches are compositionally biased toward basic residues: residues 488 to 509 (GKVR…RKGR) and 542 to 553 (SAMKKKSFKTKK).

In terms of assembly, interacts (via PxVxL motif) with CBX5.

It localises to the nucleus. The protein resides in the chromosome. Its function is as follows. Component of heterochromatin that maintains heterochromatin integrity during G1/S progression and regulates the duration of G1 phase to critically influence cell proliferative capacity. May play a role in hypoxia-induced oncogenesis. This chain is Heterochromatin protein 1-binding protein 3 (Hp1bp3), found in Rattus norvegicus (Rat).